Consider the following 157-residue polypeptide: Nascent polypeptide-associated complex subunit beta (157 aa).

A disordered region spans residues 1-28; sequence MPVDPEKLAKLQKSSAKKVGGSRVKAKK. The NAC-A/B domain maps to 33–98; the sequence is EQDDTKLIEA…PQEKNITQLI (66 aa). A disordered region spans residues 124–157; sequence KTPKDFNTGSANAAADAGGEDIPDLVDQKFDDVE.

This sequence belongs to the NAC-beta family. In terms of assembly, part of the nascent polypeptide-associated complex (NAC), consisting of EGD2 and EGD1. NAC associates with ribosomes via EGD1.

It localises to the cytoplasm. The protein resides in the nucleus. Functionally, component of the nascent polypeptide-associated complex (NAC), a dynamic component of the ribosomal exit tunnel, protecting the emerging polypeptides from interaction with other cytoplasmic proteins to ensure appropriate nascent protein targeting. The NAC complex also promotes mitochondrial protein import by enhancing productive ribosome interactions with the outer mitochondrial membrane and blocks the inappropriate interaction of ribosomes translating non-secretory nascent polypeptides with translocation sites in the membrane of the endoplasmic reticulum. EGD1 may act as a transcription factor that exert a negative effect on the expression of several genes that are transcribed by RNA polymerase II. In Candida albicans (strain SC5314 / ATCC MYA-2876) (Yeast), this protein is Nascent polypeptide-associated complex subunit beta (EGD1).